Consider the following 152-residue polypeptide: MRAVIQRAKEAKVTVGGEVVGAIDAGFVVLLGITHEDTEDDAAYLAEKIAHLRVFEDEDGKMNRSLLDVGGAVLSVSQFTLYGDCRKGRRPNFMAAAKPDHALPLYEAFNAALRERGVHVETGVFGAMMDVSLTNDGPVTLIIDSSEKPGNR.

Residues 137–138 carry the Gly-cisPro motif, important for rejection of L-amino acids motif; sequence GP.

This sequence belongs to the DTD family. Homodimer.

The protein localises to the cytoplasm. It carries out the reaction glycyl-tRNA(Ala) + H2O = tRNA(Ala) + glycine + H(+). The enzyme catalyses a D-aminoacyl-tRNA + H2O = a tRNA + a D-alpha-amino acid + H(+). In terms of biological role, an aminoacyl-tRNA editing enzyme that deacylates mischarged D-aminoacyl-tRNAs. Also deacylates mischarged glycyl-tRNA(Ala), protecting cells against glycine mischarging by AlaRS. Acts via tRNA-based rather than protein-based catalysis; rejects L-amino acids rather than detecting D-amino acids in the active site. By recycling D-aminoacyl-tRNA to D-amino acids and free tRNA molecules, this enzyme counteracts the toxicity associated with the formation of D-aminoacyl-tRNA entities in vivo and helps enforce protein L-homochirality. This is D-aminoacyl-tRNA deacylase from Thermus aquaticus.